A 563-amino-acid polypeptide reads, in one-letter code: Inositol-3-phosphate synthase 1-B (563 aa).

It belongs to the myo-inositol 1-phosphate synthase family. It depends on NAD(+) as a cofactor.

It localises to the cytoplasm. The catalysed reaction is D-glucose 6-phosphate = 1D-myo-inositol 3-phosphate. It functions in the pathway polyol metabolism; myo-inositol biosynthesis; myo-inositol from D-glucose 6-phosphate: step 1/2. In terms of biological role, key enzyme in myo-inositol biosynthesis pathway that catalyzes the conversion of glucose 6-phosphate to 1-myo-inositol 1-phosphate in a NAD-dependent manner. Rate-limiting enzyme in the synthesis of all inositol-containing compounds. The polypeptide is Inositol-3-phosphate synthase 1-B (isyna1-b) (Xenopus laevis (African clawed frog)).